A 272-amino-acid chain; its full sequence is Putative MgpC-like protein MPN_366 (272 aa).

Disordered regions lie at residues 65-84 and 171-196; these read QESQKALNGSQSGSSDTSGS and GSGQESSWNSQRSQKGLKTTPLPMPS. Residues 72–84 show a composition bias toward low complexity; the sequence is NGSQSGSSDTSGS. Residues 173 to 187 are compositionally biased toward polar residues; that stretch reads GQESSWNSQRSQKGL.

Belongs to the MgpC family.

This Mycoplasma pneumoniae (strain ATCC 29342 / M129 / Subtype 1) (Mycoplasmoides pneumoniae) protein is Putative MgpC-like protein MPN_366.